A 491-amino-acid polypeptide reads, in one-letter code: MNLSSLRLESNPRWSYHAAHFPAHHGLNPSFRRNFVSCSSIKPSASSSLSVAESFTRDSASRIESLSQVSGVLGSQWGDEGKGKLVDILAEHFDIVARCQGGANAGHTIYNSEGKKFALHLVPSGILNEDTLCVIGNGVVVHLPGLFKEIDGLEANGVSCTGRILVSDRAHLLFDFHQEVDGLREAELAKSFIGTTRRGIGPCYSSKVIRNGIRVCDLRHMDTFPQKLDALLSDVASRFESFKYGPEMLKEEVERYKRFAERLEPFITDTVHFMNESIAKKKKILVEGGQATMLDIDFGTYPFVTSSSPSAGGICTGLGIAPRVVGDLIGVVKAYTSRVGSGPFPTEILGQGGDLLRFAGQEFGTTTGRPRRCGWLDVVALKYVCQINGFSSLNLTKLDVLSEFSEIQIGVSYKQIDGTPVESFPGDLCLLEQLKVDYEVLPGWKSDISSIRKYADLPKAAQQYVERIEELVGVPIHYIGIGPGRDALIYK.

GTP contacts are provided by residues Gly78–Lys84 and Gly106–Thr108. Residue Asp79 is the Proton acceptor of the active site. Residues Asp79 and Gly106 each coordinate Mg(2+). Residues Asp79–Lys82, Asn104–His107, Thr196, Arg210, Gln290, Thr305, and Arg369 each bind IMP. The Proton donor role is filled by His107. Thr365 to Arg371 is a substrate binding site. Residues Arg371, Lys397 to Asp399, and Gly480 to Gly482 contribute to the GTP site.

The protein belongs to the adenylosuccinate synthetase family. Homodimer. Requires Mg(2+) as cofactor.

It is found in the plastid. It localises to the chloroplast. It catalyses the reaction IMP + L-aspartate + GTP = N(6)-(1,2-dicarboxyethyl)-AMP + GDP + phosphate + 2 H(+). It functions in the pathway purine metabolism; AMP biosynthesis via de novo pathway; AMP from IMP: step 1/2. Its function is as follows. Plays an important role in the de novo pathway and in the salvage pathway of purine nucleotide biosynthesis. Catalyzes the first committed step in the biosynthesis of AMP from IMP. In Populus trichocarpa (Western balsam poplar), this protein is Adenylosuccinate synthetase, chloroplastic.